We begin with the raw amino-acid sequence, 328 residues long: Octanoyltransferase, mitochondrial (328 aa).

The BPL/LPL catalytic domain maps to 108 to 312 (MKPNPIILTF…EMTKLLGIKT (205 aa)). Residues 162–169 (RGGQVTFH), 241–243 (SVG), and 254–256 (GVA) contribute to the substrate site. Cys-272 functions as the Acyl-thioester intermediate in the catalytic mechanism.

It belongs to the LipB family.

It localises to the mitochondrion. It carries out the reaction octanoyl-[ACP] + L-lysyl-[protein] = N(6)-octanoyl-L-lysyl-[protein] + holo-[ACP] + H(+). It functions in the pathway protein modification; protein lipoylation via endogenous pathway; protein N(6)-(lipoyl)lysine from octanoyl-[acyl-carrier-protein]: step 1/2. Functionally, catalyzes the transfer of endogenously produced octanoic acid from octanoyl-acyl-carrier-protein onto the lipoyl domains of lipoate-dependent enzymes. Lipoyl-ACP can also act as a substrate although octanoyl-ACP is likely to be the physiological substrate. This is Octanoyltransferase, mitochondrial (LIP2) from Saccharomyces cerevisiae (strain ATCC 204508 / S288c) (Baker's yeast).